Reading from the N-terminus, the 368-residue chain is Spermidine/putrescine import ATP-binding protein PotA (368 aa).

Positions 8–238 (IELRGVTKNF…PANLYVARFV (231 aa)) constitute an ABC transporter domain. 40–47 (GPSGCGKT) serves as a coordination point for ATP.

The protein belongs to the ABC transporter superfamily. Spermidine/putrescine importer (TC 3.A.1.11.1) family. In terms of assembly, the complex is composed of two ATP-binding proteins (PotA), two transmembrane proteins (PotB and PotC) and a solute-binding protein (PotD).

It localises to the cell inner membrane. The enzyme catalyses ATP + H2O + polyamine-[polyamine-binding protein]Side 1 = ADP + phosphate + polyamineSide 2 + [polyamine-binding protein]Side 1.. In terms of biological role, part of the ABC transporter complex PotABCD involved in spermidine/putrescine import. Responsible for energy coupling to the transport system. The sequence is that of Spermidine/putrescine import ATP-binding protein PotA from Nitratidesulfovibrio vulgaris (strain ATCC 29579 / DSM 644 / CCUG 34227 / NCIMB 8303 / VKM B-1760 / Hildenborough) (Desulfovibrio vulgaris).